We begin with the raw amino-acid sequence, 287 residues long: MAGAKEIRSKIASVQNTQKITKAMEMVAASKMRKSQDRMAASRPYAETMRKVIGHLAHGNLEYKHPYLEDRDVKRVGYLVVSTDRGLCGGLNINLFKKLLAEMKTWTDKGVQCDLAMIGSKGVSFFNSVGGNVVAQVTGMGDNPSLSELIGPVKVMLQAYDEGRLDKLYIVSNKFINTMSQVPTISQLLPLPASDDDDLKHKSWDYLYEPDPKALLDTLLRRYVESQVYQGVVENLASEQAARMVAMKAATDNGGSLIKELQLVYNKARQASITQELTEIVSGAAAV.

It belongs to the ATPase gamma chain family. As to quaternary structure, F-type ATPases have 2 components, CF(1) - the catalytic core - and CF(0) - the membrane proton channel. CF(1) has five subunits: alpha(3), beta(3), gamma(1), delta(1), epsilon(1). CF(0) has three main subunits: a, b and c.

Its subcellular location is the cell inner membrane. Functionally, produces ATP from ADP in the presence of a proton gradient across the membrane. The gamma chain is believed to be important in regulating ATPase activity and the flow of protons through the CF(0) complex. This chain is ATP synthase gamma chain, found in Escherichia fergusonii (strain ATCC 35469 / DSM 13698 / CCUG 18766 / IAM 14443 / JCM 21226 / LMG 7866 / NBRC 102419 / NCTC 12128 / CDC 0568-73).